The primary structure comprises 283 residues: Elongation factor Ts (283 aa).

An involved in Mg(2+) ion dislocation from EF-Tu region spans residues 79–82 (TDFV).

The protein belongs to the EF-Ts family.

It is found in the cytoplasm. Functionally, associates with the EF-Tu.GDP complex and induces the exchange of GDP to GTP. It remains bound to the aminoacyl-tRNA.EF-Tu.GTP complex up to the GTP hydrolysis stage on the ribosome. This Shewanella amazonensis (strain ATCC BAA-1098 / SB2B) protein is Elongation factor Ts.